The chain runs to 635 residues: Threonine--tRNA ligase (635 aa).

The TGS domain occupies Met-1–Thr-61. The interval Asp-242–Pro-533 is catalytic. Cys-333, His-384, and His-510 together coordinate Zn(2+).

The protein belongs to the class-II aminoacyl-tRNA synthetase family. In terms of assembly, homodimer. It depends on Zn(2+) as a cofactor.

The protein localises to the cytoplasm. The enzyme catalyses tRNA(Thr) + L-threonine + ATP = L-threonyl-tRNA(Thr) + AMP + diphosphate + H(+). Its function is as follows. Catalyzes the attachment of threonine to tRNA(Thr) in a two-step reaction: L-threonine is first activated by ATP to form Thr-AMP and then transferred to the acceptor end of tRNA(Thr). Also edits incorrectly charged L-seryl-tRNA(Thr). The chain is Threonine--tRNA ligase from Nitrosomonas eutropha (strain DSM 101675 / C91 / Nm57).